A 923-amino-acid polypeptide reads, in one-letter code: DNA mismatch repair protein MutS (923 aa).

ATP is bound at residue 671 to 678 (GPNMAGKS).

It belongs to the DNA mismatch repair MutS family.

Its function is as follows. This protein is involved in the repair of mismatches in DNA. It is possible that it carries out the mismatch recognition step. This protein has a weak ATPase activity. This Rhodopseudomonas palustris (strain BisB5) protein is DNA mismatch repair protein MutS.